A 142-amino-acid polypeptide reads, in one-letter code: Transcriptional regulator MraZ (142 aa).

2 consecutive SpoVT-AbrB domains span residues 5 to 47 (EYNH…PMEE) and 76 to 119 (ANEI…SREK).

Belongs to the MraZ family. In terms of assembly, forms oligomers.

The protein localises to the cytoplasm. It localises to the nucleoid. In Clostridium tetani (strain Massachusetts / E88), this protein is Transcriptional regulator MraZ.